Here is a 707-residue protein sequence, read N- to C-terminus: MSQYTEKEPSVMDQDSSKAAWPRAAGGYQTITGRRYGRRHAYVSFKPCMTRHERSLGRAGDDYEVLELDDVAKENTAGSSSLDQVHPSLPSETTVEKSETEIPTCGPALNQSTESNPSVATVCHSEEVRETLDSSTNLQNHAERECTPAVCNASSVQNGIVLVHTDSYDPDSKHDENDSLQLCAQAVEGGRRQKVLGNAVFELENGEVERYADLCPSVPSLSGEIREESEELGSALLEKNSAGDAEAVHQDGQEFQRSSEDGIVRKRRQDDTDQGRQTENSTEDADCVPGHVEQNTSERANHHGSSPEQVVRPKVRKVISSSQVDQESGFNRHEAKQRSVQRWREALEVEECSSDDPIIKCDDYDGDHDCMFLTPSYSRVTPREAERHRATAENGATASGRQEARENAFWNACGEYYQLFDKDEDSSECSDGEWSASLPHRFSGTEKDQSSSDESWETLPGKDENEPELQSDSSGPEEENQELSLQEGEQTSLEEGEIPWLQYNEVNESSSDEGNEPANEFAQPEAFMLDGNNNLEDDSSVSEDLDVDWSLFDGFADGLGVAEAISYVDPQFLTYMALEERLAQAMETALAHLESLAVDVEVANPPASKESIDGLPETLVLEDHTAIGQEQCCPICCSEYIKDDIATELPCHHFFHKPCVSIWLQKSGTCPVCRRHFPPAVIDASAAASSEPDLDASPANDNAEEAP.

Residues 1-10 (MSQYTEKEPS) show a composition bias toward basic and acidic residues. 3 disordered regions span residues 1 to 23 (MSQYTEKEPSVMDQDSSKAAWPR), 75 to 120 (NTAG…PSVA), and 242 to 290 (AGDA…CVPG). Serine 2 bears the N-acetylserine mark. Residues 109 to 119 (LNQSTESNPSV) are compositionally biased toward polar residues. A compositionally biased stretch (basic and acidic residues) spans 246–276 (EAVHQDGQEFQRSSEDGIVRKRRQDDTDQGR). 2 positions are modified to phosphoserine: serine 306 and serine 320. At serine 339 the chain carries Phosphoserine; by PKA. Disordered regions lie at residues 380 to 403 (VTPREAERHRATAENGATASGRQE) and 424 to 493 (EDSS…QTSL). Residues 381–391 (TPREAERHRAT) are compositionally biased toward basic and acidic residues. Serine 430 carries the phosphoserine modification. The span at 465 to 481 (NEPELQSDSSGPEEENQ) shows a compositional bias: acidic residues. Polar residues predominate over residues 482 to 491 (ELSLQEGEQT). Residues 530 to 707 (DGNNNLEDDS…PANDNAEEAP (178 aa)) are interaction with PRKAR1A, PRKAR2A and PRKAR2B. Positions 549–569 (WSLFDGFADGLGVAEAISYVD) are mediates interaction with TBC1D31. The RING-type; atypical zinc finger occupies 633–674 (CPICCSEYIKDDIATELPCHHFFHKPCVSIWLQKSGTCPVCR). The tract at residues 686–707 (AAASSEPDLDASPANDNAEEAP) is disordered.

As to quaternary structure, binds ubiquitin-conjugating enzymes (E2s). In vitro, interacts with the ubiquitin-conjugating enzyme, UBE2D2. The phosphorylated form interacts with PRKAR1A, PRKAR2A and PRKAR2B. Binds the catalytic subunits of cAMP-dependent protein kinase. Interacts with MFHAS1. Interacts with TBC1D31; the interaction is direct and recruits PJA2 to centrosomes. In terms of tissue distribution, highly expressed in the brain, in nerve cells but not in glial cells. Abundantly expressed in pyramidal neurons and in the CA3 region of apical dendrites. Colocalizes with PRKAR2B in dentate granule cells and at postsynaptic sites of primary hippocampal neurons.

It localises to the cytoplasm. The protein localises to the cell membrane. The protein resides in the endoplasmic reticulum membrane. It is found in the golgi apparatus membrane. Its subcellular location is the synapse. It localises to the postsynaptic density. The protein localises to the cytoskeleton. The protein resides in the microtubule organizing center. It is found in the centrosome. It catalyses the reaction S-ubiquitinyl-[E2 ubiquitin-conjugating enzyme]-L-cysteine + [acceptor protein]-L-lysine = [E2 ubiquitin-conjugating enzyme]-L-cysteine + N(6)-ubiquitinyl-[acceptor protein]-L-lysine.. It functions in the pathway protein modification; protein ubiquitination. Its function is as follows. Has E2-dependent E3 ubiquitin-protein ligase activity. Responsible for ubiquitination of cAMP-dependent protein kinase type I and type II-alpha/beta regulatory subunits and for targeting them for proteasomal degradation. Essential for PKA-mediated long-term memory processes. Through the ubiquitination of MFHAS1, positively regulates the TLR2 signaling pathway that leads to the activation of the downstream p38 and JNK MAP kinases and promotes the polarization of macrophages toward the pro-inflammatory M1 phenotype. Plays a role in ciliogenesis by ubiquitinating OFD1. The protein is E3 ubiquitin-protein ligase Praja-2 (Pja2) of Rattus norvegicus (Rat).